The chain runs to 326 residues: MAFQPGSRGGRGGARGGARGGARGGRGGFGGRGGSRGGRGGFDSRGGARGGFGGRGGSRGGPRGGPRGGARGGRGGARGGAKGGAKVVIEPHKHAGVFIARGKEDLLVTKNVAPGESVYGEKRISVEEPASEEGVPPTKVEYRVWNPFRSKLAAGIMGGLDELFIAPGKKVLYLGAASGTSVSHVADVVGPEGLVYAVEFSHRPGRELISMAKKRPNVIPIIEDARHPQKYRMLIGMVDAVFADVAQPDQARIIALNSHMFLKDQGGVVISIKANCIDSTVDAETVFAREVQKLREEKIKPLEQLTLEPYERDHCIVIGRYMRSGL.

A disordered region spans residues 1–84 (MAFQPGSRGG…GGARGGAKGG (84 aa)). The segment covering 7–83 (SRGGRGGARG…RGGARGGAKG (77 aa)) has biased composition (gly residues). Arg-8, Arg-11, Arg-15, Arg-19, Arg-23, Arg-26, Arg-32, Arg-36, Arg-39, Arg-45, Arg-49, Arg-55, Arg-59, Arg-63, Arg-67, Arg-71, Arg-74, and Arg-78 each carry asymmetric dimethylarginine. S-adenosyl-L-methionine contacts are provided by residues 180 to 181 (TS), 199 to 200 (EF), 224 to 225 (DA), and 244 to 247 (DVAQ).

This sequence belongs to the methyltransferase superfamily. Fibrillarin family. In terms of assembly, component of box C/D small nucleolar ribonucleoprotein (snoRNP) particles that contain SNU13, NOP1, SIK1/NOP56 and NOP58, plus a guide RNA. In terms of processing, by homology to other fibrillarins, some or all of the N-terminal domain arginines are modified to asymmetric dimethylarginine (DMA).

Its subcellular location is the nucleus. The protein localises to the nucleolus. The enzyme catalyses L-glutaminyl-[histone H2A] + S-adenosyl-L-methionine = N(5)-methyl-L-glutaminyl-[histone H2A] + S-adenosyl-L-homocysteine + H(+). In terms of biological role, S-adenosyl-L-methionine-dependent methyltransferase that has the ability to methylate both RNAs and proteins. Involved in pre-rRNA processing. Utilizes the methyl donor S-adenosyl-L-methionine to catalyze the site-specific 2'-hydroxyl methylation of ribose moieties in pre-ribosomal RNA. Site specificity is provided by a guide RNA that base pairs with the substrate. Methylation occurs at a characteristic distance from the sequence involved in base pairing with the guide RNA. Also acts as a protein methyltransferase by mediating methylation of 'Gln-105' of histone H2A (H2AQ105me), a modification that impairs binding of the FACT complex and is specifically present at 35S ribosomal DNA locus. The sequence is that of rRNA 2'-O-methyltransferase fibrillarin (NOP1) from Eremothecium gossypii (strain ATCC 10895 / CBS 109.51 / FGSC 9923 / NRRL Y-1056) (Yeast).